A 275-amino-acid polypeptide reads, in one-letter code: Increased recombination centers protein 6 (275 aa).

This sequence belongs to the IRC6 family.

Involved in gross chromosomal rearrangements (GCRs) and telomere healing. This Candida dubliniensis (strain CD36 / ATCC MYA-646 / CBS 7987 / NCPF 3949 / NRRL Y-17841) (Yeast) protein is Increased recombination centers protein 6 (IRC6).